We begin with the raw amino-acid sequence, 228 residues long: Putative N-acetylmannosamine-6-phosphate 2-epimerase (228 aa).

This sequence belongs to the NanE family.

The enzyme catalyses an N-acyl-D-glucosamine 6-phosphate = an N-acyl-D-mannosamine 6-phosphate. It participates in amino-sugar metabolism; N-acetylneuraminate degradation; D-fructose 6-phosphate from N-acetylneuraminate: step 3/5. Converts N-acetylmannosamine-6-phosphate (ManNAc-6-P) to N-acetylglucosamine-6-phosphate (GlcNAc-6-P). This chain is Putative N-acetylmannosamine-6-phosphate 2-epimerase, found in Pasteurella multocida (strain Pm70).